The following is a 315-amino-acid chain: MEARAQSGSGSQPLLQAPRDSGRQRGEPDPRDALPQQVHVLSLDQIRAIRNTNEYTEGPTVLPRAGLKPAPRPTAQHKHERLHGLPEPRQPSRPQHPPAHPSARASLARSISTVSSGSRSSTRTSTSSSSSEQRLLGSSFSSGPLADRIIRVQPKSELKPGELKPLSKEDVGLHAYKCEDCGKCKCKECTYPRPLPSDWICDKQCLCSAQNVIDYGTCVCCVKGLFYHCSNDDEDNCADNPCSCSQSHCCTRWSAMGVMSLFLPCLWCYLPAKGCLKLCQGCYDRVNRPGCRCKNSNTVCCKVPTVPPRNFEKPT.

Polar residues predominate over residues M1–L14. Disordered stretches follow at residues M1–V38 and N51–F140. Residues D20 to D32 are compositionally biased toward basic and acidic residues. Residues P88–H100 show a composition bias toward pro residues. The span at R109–F140 shows a compositional bias: low complexity. Residues S118 to T315 form a required for interaction with CAV1 region. The SPR domain maps to K177 to C291. The segment at C178 to T315 is required for interaction with TESK1.

This sequence belongs to the sprouty family. In terms of assembly, forms heterodimers with SPRY1. Forms a tripartite complex containing GAB1, METTL13 and SPRY2. Within the complex interacts with METTL13. Interacts with RAF1. Interacts (via C-terminus) with TESK1 (via C-terminus); the interaction disrupts SPRY2 interaction with GRB2, potentially via disruption of SPRY2 serine dephosphorylation. Interacts with PPP2R1A/PP2A-A and PPP2CA/PP2A-C; the interaction with PPP2CA/PP2A-C is inhibited by interaction with TESK1, possibly by vesicular sequestration of SPRY2. Inhibition of the interaction with the serine/threonine-protein phosphatase 2A (PP2A) holoenzyme results in loss of PP2A-mediated dephosphorylation, resulting in the loss of SPRY2 interaction with GRB2. Interacts with GRB2. Interacts with CBL/C-CBL; the interaction inhibits CBL-mediated ubiquitination of EGFR. Interacts (via C-terminus) with CAV1 (via C-terminus). Post-translationally, cleaved at Pro-144 by the prolyl endopeptidase FAP (seprase) activity (in vitro).

It is found in the cytoplasm. The protein localises to the cytoskeleton. The protein resides in the cell projection. Its subcellular location is the ruffle membrane. Its function is as follows. Antagonist of fibroblast growth factor (FGF) pathways via inhibition of FGF-mediated phosphorylation of ERK1/2. Thereby acts as an antagonist of FGF-induced retinal lens fiber differentiation, may inhibit limb bud outgrowth and may negatively modulate respiratory organogenesis. Inhibits TGFB-induced epithelial-to-mesenchymal transition in retinal lens epithelial cells. Inhibits CBL/C-CBL-mediated EGFR ubiquitination. This Bos taurus (Bovine) protein is Protein sprouty homolog 2 (SPRY2).